The following is a 450-amino-acid chain: tRNA modification GTPase MnmE (450 aa).

Residues arginine 25, glutamate 86, and arginine 126 each contribute to the (6S)-5-formyl-5,6,7,8-tetrahydrofolate site. A TrmE-type G domain is found at 221 to 373 (GLRVALVGRP…LVQALLERCG (153 aa)). K(+) is bound at residue asparagine 231. Residues 231 to 236 (NVGKSS), 250 to 256 (TDLPGTT), 275 to 278 (DTAG), and 336 to 339 (NKAD) contribute to the GTP site. Mg(2+) is bound at residue serine 235. The K(+) site is built by threonine 250, leucine 252, and threonine 255. Threonine 256 lines the Mg(2+) pocket. (6S)-5-formyl-5,6,7,8-tetrahydrofolate is bound at residue lysine 450.

The protein belongs to the TRAFAC class TrmE-Era-EngA-EngB-Septin-like GTPase superfamily. TrmE GTPase family. In terms of assembly, homodimer. Heterotetramer of two MnmE and two MnmG subunits. Requires K(+) as cofactor.

The protein localises to the cytoplasm. In terms of biological role, exhibits a very high intrinsic GTPase hydrolysis rate. Involved in the addition of a carboxymethylaminomethyl (cmnm) group at the wobble position (U34) of certain tRNAs, forming tRNA-cmnm(5)s(2)U34. The protein is tRNA modification GTPase MnmE of Synechococcus sp. (strain CC9605).